A 732-amino-acid chain; its full sequence is MSEHSRCPVTGRTAGNPVAGGGIANRDWWPNQLHLDMLHQHSSLSNPMEEAFKYKEEFGKLDLKAVKKDLYTLMTDSQEWWPADYGHYGGLFIRMTWHSAGTYRTGDGRGGGGTGNQRFAPLNSWPDNANLDKARRLLWPIKQKYGKKLSWADLMILAGNYALESMGFKTFGFGGGRVDIWEPEEDIYWGKEVEWLDNKRYSGERDLENPLAAVQMGLIYVNPEGPDGKPDPVAAGKDIRETFGRMAMNDEETVALVAGGHTFGKCHGVGDPKLVGPEPEAADIEEQGLGWKSGYGSGKGDETMTSGLEGAWTPDPIHWDMGYLGMLFKYEWELTKSPAGAWQWKPTDVAEEDLAPAAHDPSKRVPTMMTTADLAMRMDPIYGPISRRYYEHPDQFADAFARAWFKLTHRDMGPKSRYLGTEVPEEDLIWQDPVPAVDHELIGDREIAELKKRLLASGLSIPELVSTAWASASTFRGSDKRGGANGARIRLAPQKDWEVNQPEQLKIVLQKLEEIRQEFNDAQSGGKRVSLADLIVLGGCAGVEEAARKAGTDVTIPFTPGRTDASQEQTDTESFAVLEPLADGFRNYMKKKYSVSAEEMLVDRSQLLTLTAPEMTVLVGGLRVLNVNFGQSPHGVFTTLPETLTNDFFVNLLDMGTEWKPLSKEHDTFEGRDRKTGEPRWTATRVDLIFGSNSRLRAIAEVYGSDNAQEKFVHDFVAAWNKVMNLDRFELG.

Residues 97 to 220 (WHSAGTYRTG…LAAVQMGLIY (124 aa)) constitute a cross-link (tryptophyl-tyrosyl-methioninium (Trp-Tyr) (with M-246)). The active-site Proton acceptor is the His-98. A cross-link (tryptophyl-tyrosyl-methioninium (Tyr-Met) (with W-97)) is located at residues 220-246 (YVNPEGPDGKPDPVAAGKDIRETFGRM). Heme b is bound at residue His-261.

It belongs to the peroxidase family. Peroxidase/catalase subfamily. In terms of assembly, homodimer or homotetramer. Heme b serves as cofactor. Post-translationally, formation of the three residue Trp-Tyr-Met cross-link is important for the catalase, but not the peroxidase activity of the enzyme.

It catalyses the reaction H2O2 + AH2 = A + 2 H2O. The catalysed reaction is 2 H2O2 = O2 + 2 H2O. Functionally, bifunctional enzyme with both catalase and broad-spectrum peroxidase activity. This Chlorobium phaeobacteroides (strain BS1) protein is Catalase-peroxidase.